A 217-amino-acid chain; its full sequence is CLA biosynthesis enone reductase (217 aa).

FMN-binding residues include arginine 20, serine 22, and arginine 24. Cysteine 51 contributes to the 10-oxooctadecanoate binding site. Residues asparagine 78 and glutamine 81 each coordinate FMN. Residue arginine 118 participates in 10-oxooctadecanoate binding. FMN is bound by residues asparagine 165, serine 168, glycine 169, and arginine 206.

It belongs to the nitroreductase family. Homodimer. It depends on FMN as a cofactor.

The enzyme catalyses 10-oxo-(11E)-octadecenoate + NADH + H(+) = 10-oxooctadecanoate + NAD(+). It participates in lipid metabolism; fatty acid metabolism. Functionally, is involved in a saturation metabolic pathway of polyunsaturated fatty acids, that detoxifies unsaturated fatty acids and generates hydroxy fatty acids, oxo fatty acids, conjugated fatty acids such as conjugated linoleic acids (CLAs), and partially saturated trans-fatty acids as intermediates. CLA-ER catalyzes the saturation of the carbon-carbon double bond in 10-oxo-(11E)-octadecenoate to produce 10-oxooctadecanoate, during linoleate metabolism. As part of the gut microbiome, this enzyme modifies host fatty acid composition and is expected to improve human health by altering lipid metabolism related to the onset of metabolic syndrome. This is CLA biosynthesis enone reductase from Lactiplantibacillus plantarum (Lactobacillus plantarum).